We begin with the raw amino-acid sequence, 183 residues long: GTP cyclohydrolase 1 (183 aa).

The Zn(2+) site is built by Cys71, His74, and Cys142.

This sequence belongs to the GTP cyclohydrolase I family. As to quaternary structure, toroid-shaped homodecamer, composed of two pentamers of five dimers.

The enzyme catalyses GTP + H2O = 7,8-dihydroneopterin 3'-triphosphate + formate + H(+). Its pathway is cofactor biosynthesis; 7,8-dihydroneopterin triphosphate biosynthesis; 7,8-dihydroneopterin triphosphate from GTP: step 1/1. In Leptospira interrogans serogroup Icterohaemorrhagiae serovar copenhageni (strain Fiocruz L1-130), this protein is GTP cyclohydrolase 1.